Consider the following 84-residue polypeptide: Beta-toxin Tf1a (84 aa).

The N-terminal stretch at 1–20 (MKGMILFISCLLLIGIVVEC) is a signal peptide. One can recognise an LCN-type CS-alpha/beta domain in the interval 21–82 (KEGYLMDHEG…VWERATNRCG (62 aa)). 4 cysteine pairs are disulfide-bonded: Cys31–Cys81, Cys35–Cys57, Cys43–Cys62, and Cys47–Cys64. Cys81 carries the post-translational modification Cysteine amide.

The protein belongs to the long (4 C-C) scorpion toxin superfamily. Sodium channel inhibitor family. Beta subfamily. Expressed by the venom gland.

Its subcellular location is the secreted. In terms of biological role, beta toxins bind voltage-independently at site-4 of sodium channels (Nav) and shift the voltage of activation toward more negative potentials thereby affecting sodium channel activation and promoting spontaneous and repetitive firing. The toxin induces a leftward shift, on all channels tested (including Blattella germanica and Varroa destructor Nav1), displacing a change in voltage dependence activation to more hyperpolarized potentials. In addition, the toxin mostly inhibits peak current of hNav1.4/SCN4A (53% inhibition of peak current at 100 nM) and hNav1.5/SCN5A (71% inhibition). The chain is Beta-toxin Tf1a from Tityus fasciolatus (Central Brazilian scorpion).